The following is a 202-amino-acid chain: Matrix protein (202 aa).

Residues K9–L31 are disordered. The short motif at P35–Y38 is the PPXY motif element. An essential for glycoprotein binding region spans residues K115–V151.

The protein belongs to the lyssavirus matrix protein family. As to quaternary structure, homomultimer. Interacts with nucleoprotein and with the cytoplasmic domain of glycoprotein. Interacts with host ATP6V1A; this interaction plays an important role in virion uncoating after viral entry.

Its subcellular location is the virion membrane. The protein resides in the host endomembrane system. The protein localises to the host cytoplasm. In terms of biological role, plays a major role in assembly, budding and uncoating of virion after membrane fusion. Completely covers the ribonucleoprotein coil and keep it in condensed bullet-shaped form. Inhibits viral transcription and stimulates replication. Plays a major role in early induction of TRAIL-mediated apoptosis in infected neurons. Inhibits the integrated stress response (ISR) in the infected cell by blocking the formation of stress granules. This Rabies virus (strain SAD B19) (RABV) protein is Matrix protein (M).